Here is a 150-residue protein sequence, read N- to C-terminus: C-C motif chemokine 25 (150 aa).

A signal peptide spans 1 to 23; that stretch reads MNLWLLACLVAGFLGAWAPAVHT. 2 cysteine pairs are disulfide-bonded: Cys-30–Cys-58 and Cys-31–Cys-75.

The protein belongs to the intercrine beta (chemokine CC) family. In terms of tissue distribution, specifically expressed by thymic dendritic cells. High levels in thymus and small intestine.

The protein resides in the secreted. Potentially involved in T-cell development. Recombinant protein shows chemotactic activity on thymocytes, macrophages, THP-1 cells, and dendritics cells but is inactive on peripheral blood lymphocytes and neutrophils. Binds to CCR9. Isoform 2 is an antagonist of isoform 1. Binds to atypical chemokine receptor ACKR4 and mediates the recruitment of beta-arrestin (ARRB1/2) to ACKR4. The polypeptide is C-C motif chemokine 25 (CCL25) (Homo sapiens (Human)).